A 456-amino-acid polypeptide reads, in one-letter code: tRNA-2-methylthio-N(6)-dimethylallyladenosine synthase (456 aa).

One can recognise an MTTase N-terminal domain in the interval 19 to 136; the sequence is LTFNVQTFGC…LAELIYARHT (118 aa). Residues C28, C63, C97, C173, C177, and C180 each contribute to the [4Fe-4S] cluster site. The Radical SAM core domain occupies 159–389; the sequence is QKYKFKAGVN…LTTIRESSSK (231 aa). The TRAM domain maps to 392 to 455; sequence KDDEGKIAEV…GFYYMGEMME (64 aa).

The protein belongs to the methylthiotransferase family. MiaB subfamily. As to quaternary structure, monomer. Requires [4Fe-4S] cluster as cofactor.

It is found in the cytoplasm. The catalysed reaction is N(6)-dimethylallyladenosine(37) in tRNA + (sulfur carrier)-SH + AH2 + 2 S-adenosyl-L-methionine = 2-methylsulfanyl-N(6)-dimethylallyladenosine(37) in tRNA + (sulfur carrier)-H + 5'-deoxyadenosine + L-methionine + A + S-adenosyl-L-homocysteine + 2 H(+). Functionally, catalyzes the methylthiolation of N6-(dimethylallyl)adenosine (i(6)A), leading to the formation of 2-methylthio-N6-(dimethylallyl)adenosine (ms(2)i(6)A) at position 37 in tRNAs that read codons beginning with uridine. This chain is tRNA-2-methylthio-N(6)-dimethylallyladenosine synthase, found in Lachnoclostridium phytofermentans (strain ATCC 700394 / DSM 18823 / ISDg) (Clostridium phytofermentans).